Consider the following 125-residue polypeptide: Cytochrome c' (125 aa).

Heme c contacts are provided by Arg-10, Glu-67, Cys-116, Cys-119, and His-120.

In terms of assembly, homodimer. In terms of processing, binds 1 heme c group covalently per subunit.

Functionally, cytochrome c' is the most widely occurring bacterial c-type cytochrome. Cytochromes c' are high-spin proteins and the heme has no sixth ligand. Their exact function is not known. This chain is Cytochrome c', found in Pararhodospirillum photometricum (Rhodospirillum photometricum).